Reading from the N-terminus, the 97-residue chain is YcgL domain-containing protein PMI1171 (97 aa).

The YcgL domain maps to 3-87 (MICAIYRSTK…PVESMLNAYL (85 aa)).

The polypeptide is YcgL domain-containing protein PMI1171 (Proteus mirabilis (strain HI4320)).